A 486-amino-acid polypeptide reads, in one-letter code: Cardiolipin synthase A (486 aa).

A run of 2 helical transmembrane segments spans residues 3–23 (IFYN…IANI) and 38–58 (MSWL…WFFF). PLD phosphodiesterase domains follow at residues 219–246 (VDVR…VDPY) and 399–426 (QKGL…DMRS). Active-site residues include histidine 224, lysine 226, aspartate 231, histidine 404, lysine 406, and aspartate 411.

This sequence belongs to the phospholipase D family. Cardiolipin synthase subfamily. ClsA sub-subfamily.

It localises to the cell inner membrane. The catalysed reaction is 2 a 1,2-diacyl-sn-glycero-3-phospho-(1'-sn-glycerol) = a cardiolipin + glycerol. In terms of biological role, catalyzes the reversible phosphatidyl group transfer from one phosphatidylglycerol molecule to another to form cardiolipin (CL) (diphosphatidylglycerol) and glycerol. The chain is Cardiolipin synthase A from Buchnera aphidicola subsp. Acyrthosiphon pisum (strain 5A).